A 366-amino-acid chain; its full sequence is MNSAPVPADTETRVNLLDLDREGMEAFFVRLGEKPFRASQLLQWIHQRGVTDFGLMTNLSKTLRSRLEAVSEIRPPELVLEQRSADGTRKWVLQVDAVNRVETVLIPDEGRNTLCVSSQVGCSLECSFCSTARQGFNRNLTTAEIIGQLWVAQHRLDEEQRISNVVLMGMGEPLLNFGNVVAATRLMMDDFAYGLSKRRVTLSTSGIVPALDRLAEVSDISLAVSLHAPDDTLRNELVPINRKYPIRELLAACKRYVGTENRRKVTFEYVMLDGVNDRPEHARALVRLLSHVPSKVNLIPFNPFPNSAYRCSHPETIARFAQTLQDAGLITTTRKTRGRDIDAACGQLVGKVNDRSRRQFRLHLAH.

The Proton acceptor role is filled by E102. The Radical SAM core domain occupies 108–340; the sequence is DEGRNTLCVS…TTTRKTRGRD (233 aa). C115 and C345 are oxidised to a cystine. Residues C122, C126, and C129 each coordinate [4Fe-4S] cluster. Residues 171–172, S203, 225–227, and N302 contribute to the S-adenosyl-L-methionine site; these read GE and SLH. The active-site S-methylcysteine intermediate is C345.

Belongs to the radical SAM superfamily. RlmN family. The cofactor is [4Fe-4S] cluster.

It localises to the cytoplasm. It catalyses the reaction adenosine(2503) in 23S rRNA + 2 reduced [2Fe-2S]-[ferredoxin] + 2 S-adenosyl-L-methionine = 2-methyladenosine(2503) in 23S rRNA + 5'-deoxyadenosine + L-methionine + 2 oxidized [2Fe-2S]-[ferredoxin] + S-adenosyl-L-homocysteine. It carries out the reaction adenosine(37) in tRNA + 2 reduced [2Fe-2S]-[ferredoxin] + 2 S-adenosyl-L-methionine = 2-methyladenosine(37) in tRNA + 5'-deoxyadenosine + L-methionine + 2 oxidized [2Fe-2S]-[ferredoxin] + S-adenosyl-L-homocysteine. In terms of biological role, specifically methylates position 2 of adenine 2503 in 23S rRNA and position 2 of adenine 37 in tRNAs. m2A2503 modification seems to play a crucial role in the proofreading step occurring at the peptidyl transferase center and thus would serve to optimize ribosomal fidelity. This is Dual-specificity RNA methyltransferase RlmN from Methylococcus capsulatus (strain ATCC 33009 / NCIMB 11132 / Bath).